A 27-amino-acid chain; its full sequence is L-amino-acid oxidase (27 aa).

As to quaternary structure, homodimer; non-covalently linked. Requires FAD as cofactor. Contains 2 disulfide bonds. Post-translationally, N-glycosylated. Expressed by the venom gland.

The protein localises to the secreted. The catalysed reaction is an L-alpha-amino acid + O2 + H2O = a 2-oxocarboxylate + H2O2 + NH4(+). The enzyme catalyses L-leucine + O2 + H2O = 4-methyl-2-oxopentanoate + H2O2 + NH4(+). Functionally, catalyzes an oxidative deamination of predominantly hydrophobic and aromatic L-amino acids, thus producing hydrogen peroxide that may contribute to the diverse toxic effects of this enzyme. Shows activity on L-Leu. Exhibits diverse biological activities, such as hemolysis, edema, apoptosis, as well as induction of platelet aggregation. Effects of snake L-amino oxidases on platelets are controversial, since they either induce aggregation or inhibit agonist-induced aggregation. These different effects are probably due to different experimental conditions. Unlike other snake venom L-amino acid oxidases, does not induce hemorrhage. This protein may also have antibacterial and antiparasitic activities. This chain is L-amino-acid oxidase, found in Eristicophis macmahoni (Leaf-nosed viper).